Here is a 197-residue protein sequence, read N- to C-terminus: Dephospho-CoA kinase (197 aa).

Residues 3-197 (VLGLTGSIGL…IDELRGQRGS (195 aa)) enclose the DPCK domain. 11 to 16 (GLGKST) provides a ligand contact to ATP.

The protein belongs to the CoaE family.

It localises to the cytoplasm. It catalyses the reaction 3'-dephospho-CoA + ATP = ADP + CoA + H(+). The protein operates within cofactor biosynthesis; coenzyme A biosynthesis; CoA from (R)-pantothenate: step 5/5. Functionally, catalyzes the phosphorylation of the 3'-hydroxyl group of dephosphocoenzyme A to form coenzyme A. The polypeptide is Dephospho-CoA kinase (Mesorhizobium japonicum (strain LMG 29417 / CECT 9101 / MAFF 303099) (Mesorhizobium loti (strain MAFF 303099))).